A 349-amino-acid chain; its full sequence is Phosphoribosylformylglycinamidine cyclo-ligase (349 aa).

The protein belongs to the AIR synthase family.

Its subcellular location is the cytoplasm. The catalysed reaction is 2-formamido-N(1)-(5-O-phospho-beta-D-ribosyl)acetamidine + ATP = 5-amino-1-(5-phospho-beta-D-ribosyl)imidazole + ADP + phosphate + H(+). It participates in purine metabolism; IMP biosynthesis via de novo pathway; 5-amino-1-(5-phospho-D-ribosyl)imidazole from N(2)-formyl-N(1)-(5-phospho-D-ribosyl)glycinamide: step 2/2. The chain is Phosphoribosylformylglycinamidine cyclo-ligase from Lactobacillus helveticus (strain DPC 4571).